A 363-amino-acid polypeptide reads, in one-letter code: UDP-N-acetylglucosamine--N-acetylmuramyl-(pentapeptide) pyrophosphoryl-undecaprenol N-acetylglucosamine transferase (363 aa).

UDP-N-acetyl-alpha-D-glucosamine is bound by residues 10-12 (TGG), Asn124, Ser195, Ile250, and Gln295.

Belongs to the glycosyltransferase 28 family. MurG subfamily.

Its subcellular location is the cell membrane. The enzyme catalyses di-trans,octa-cis-undecaprenyl diphospho-N-acetyl-alpha-D-muramoyl-L-alanyl-D-glutamyl-meso-2,6-diaminopimeloyl-D-alanyl-D-alanine + UDP-N-acetyl-alpha-D-glucosamine = di-trans,octa-cis-undecaprenyl diphospho-[N-acetyl-alpha-D-glucosaminyl-(1-&gt;4)]-N-acetyl-alpha-D-muramoyl-L-alanyl-D-glutamyl-meso-2,6-diaminopimeloyl-D-alanyl-D-alanine + UDP + H(+). The protein operates within cell wall biogenesis; peptidoglycan biosynthesis. In terms of biological role, cell wall formation. Catalyzes the transfer of a GlcNAc subunit on undecaprenyl-pyrophosphoryl-MurNAc-pentapeptide (lipid intermediate I) to form undecaprenyl-pyrophosphoryl-MurNAc-(pentapeptide)GlcNAc (lipid intermediate II). The protein is UDP-N-acetylglucosamine--N-acetylmuramyl-(pentapeptide) pyrophosphoryl-undecaprenol N-acetylglucosamine transferase of Listeria monocytogenes serovar 1/2a (strain ATCC BAA-679 / EGD-e).